Consider the following 236-residue polypeptide: 4-hydroxy-tetrahydrodipicolinate reductase (236 aa).

NAD(+) is bound by residues 11 to 16 (GASGRM), 92 to 94 (GTT), and 116 to 119 (GSNF). His148 serves as the catalytic Proton donor/acceptor. (S)-2,3,4,5-tetrahydrodipicolinate is bound at residue His149. Catalysis depends on Lys152, which acts as the Proton donor. 158 to 159 (GS) contacts (S)-2,3,4,5-tetrahydrodipicolinate.

Belongs to the DapB family.

The protein localises to the cytoplasm. The enzyme catalyses (S)-2,3,4,5-tetrahydrodipicolinate + NAD(+) + H2O = (2S,4S)-4-hydroxy-2,3,4,5-tetrahydrodipicolinate + NADH + H(+). It catalyses the reaction (S)-2,3,4,5-tetrahydrodipicolinate + NADP(+) + H2O = (2S,4S)-4-hydroxy-2,3,4,5-tetrahydrodipicolinate + NADPH + H(+). The protein operates within amino-acid biosynthesis; L-lysine biosynthesis via DAP pathway; (S)-tetrahydrodipicolinate from L-aspartate: step 4/4. Functionally, catalyzes the conversion of 4-hydroxy-tetrahydrodipicolinate (HTPA) to tetrahydrodipicolinate. This Xylella fastidiosa (strain M23) protein is 4-hydroxy-tetrahydrodipicolinate reductase.